We begin with the raw amino-acid sequence, 207 residues long: 2,3-bisphosphoglycerate-dependent phosphoglycerate mutase (207 aa).

Substrate is bound by residues 10 to 17 (RHGQSEWN), 23 to 24 (TG), Arg62, 89 to 92 (ERDY), Lys100, 116 to 117 (RR), and 160 to 161 (GN). The Tele-phosphohistidine intermediate role is filled by His11. Glu89 serves as the catalytic Proton donor/acceptor.

The protein belongs to the phosphoglycerate mutase family. BPG-dependent PGAM subfamily. As to quaternary structure, homodimer.

The enzyme catalyses (2R)-2-phosphoglycerate = (2R)-3-phosphoglycerate. The protein operates within carbohydrate degradation; glycolysis; pyruvate from D-glyceraldehyde 3-phosphate: step 3/5. Functionally, catalyzes the interconversion of 2-phosphoglycerate and 3-phosphoglycerate. The chain is 2,3-bisphosphoglycerate-dependent phosphoglycerate mutase from Bradyrhizobium diazoefficiens (strain JCM 10833 / BCRC 13528 / IAM 13628 / NBRC 14792 / USDA 110).